Reading from the N-terminus, the 298-residue chain is GTP cyclohydrolase FolE2 (298 aa).

It belongs to the GTP cyclohydrolase IV family.

It catalyses the reaction GTP + H2O = 7,8-dihydroneopterin 3'-triphosphate + formate + H(+). It participates in cofactor biosynthesis; 7,8-dihydroneopterin triphosphate biosynthesis; 7,8-dihydroneopterin triphosphate from GTP: step 1/1. In terms of biological role, converts GTP to 7,8-dihydroneopterin triphosphate. This Neisseria meningitidis serogroup C (strain 053442) protein is GTP cyclohydrolase FolE2.